We begin with the raw amino-acid sequence, 750 residues long: Polyribonucleotide nucleotidyltransferase (750 aa).

D519 and D525 together coordinate Mg(2+). The KH domain occupies 585 to 644 (PRVIAVKIPVDKIGEVIGPKGKMINQIQEDTGADISIEDDGTVYIGATNGPSADAARSAI). Positions 656-728 (GERYLGTVVK…DRGKLSLSPV (73 aa)) constitute an S1 motif domain. The interval 725–750 (LSPVVAEEEGAASEDAPAEAAEESAE) is disordered. Over residues 730–750 (AEEEGAASEDAPAEAAEESAE) the composition is skewed to acidic residues.

This sequence belongs to the polyribonucleotide nucleotidyltransferase family. The cofactor is Mg(2+).

The protein resides in the cytoplasm. It catalyses the reaction RNA(n+1) + phosphate = RNA(n) + a ribonucleoside 5'-diphosphate. In terms of biological role, involved in mRNA degradation. Catalyzes the phosphorolysis of single-stranded polyribonucleotides processively in the 3'- to 5'-direction. The polypeptide is Polyribonucleotide nucleotidyltransferase (Paenarthrobacter aurescens (strain TC1)).